Here is a 278-residue protein sequence, read N- to C-terminus: Polyamine aminopropyltransferase (278 aa).

In terms of domain architecture, PABS spans 5–238; the sequence is ELWFTEQQTP…GLWSFTMGSK (234 aa). Gln-34 is an S-methyl-5'-thioadenosine binding site. Positions 65 and 89 each coordinate spermidine. Residues Glu-109 and 140-141 contribute to the S-methyl-5'-thioadenosine site; that span reads DG. Catalysis depends on Asp-158, which acts as the Proton acceptor. 158-161 lines the spermidine pocket; it reads DSTD. Pro-165 is a binding site for S-methyl-5'-thioadenosine.

The protein belongs to the spermidine/spermine synthase family. In terms of assembly, homodimer or homotetramer.

Its subcellular location is the cytoplasm. The catalysed reaction is S-adenosyl 3-(methylsulfanyl)propylamine + putrescine = S-methyl-5'-thioadenosine + spermidine + H(+). It participates in amine and polyamine biosynthesis; spermidine biosynthesis; spermidine from putrescine: step 1/1. Catalyzes the irreversible transfer of a propylamine group from the amino donor S-adenosylmethioninamine (decarboxy-AdoMet) to putrescine (1,4-diaminobutane) to yield spermidine. This chain is Polyamine aminopropyltransferase, found in Caldicellulosiruptor saccharolyticus (strain ATCC 43494 / DSM 8903 / Tp8T 6331).